The sequence spans 334 residues: Biotin synthase (334 aa).

The Radical SAM core domain occupies 55–280 (EEIEVEGIIS…HTMLRFAGGR (226 aa)). 3 residues coordinate [4Fe-4S] cluster: Cys-70, Cys-74, and Cys-77. Positions 113, 205, and 275 each coordinate [2Fe-2S] cluster.

It belongs to the radical SAM superfamily. Biotin synthase family. As to quaternary structure, homodimer. [4Fe-4S] cluster is required as a cofactor. The cofactor is [2Fe-2S] cluster.

It carries out the reaction (4R,5S)-dethiobiotin + (sulfur carrier)-SH + 2 reduced [2Fe-2S]-[ferredoxin] + 2 S-adenosyl-L-methionine = (sulfur carrier)-H + biotin + 2 5'-deoxyadenosine + 2 L-methionine + 2 oxidized [2Fe-2S]-[ferredoxin]. The protein operates within cofactor biosynthesis; biotin biosynthesis; biotin from 7,8-diaminononanoate: step 2/2. In terms of biological role, catalyzes the conversion of dethiobiotin (DTB) to biotin by the insertion of a sulfur atom into dethiobiotin via a radical-based mechanism. The polypeptide is Biotin synthase (Corynebacterium glutamicum (strain ATCC 13032 / DSM 20300 / JCM 1318 / BCRC 11384 / CCUG 27702 / LMG 3730 / NBRC 12168 / NCIMB 10025 / NRRL B-2784 / 534)).